Reading from the N-terminus, the 235-residue chain is Serine protease SplA (235 aa).

A signal peptide spans 1 to 35 (MNKNVMVKGLTALDILTSLGCAENISDQPHSIAKA). Residues His74, Asp113, and Ser189 each act as charge relay system in the active site.

It belongs to the peptidase S1B family.

It localises to the secreted. In Staphylococcus aureus, this protein is Serine protease SplA (splA).